Consider the following 885-residue polypeptide: High affinity cAMP-specific and IBMX-insensitive 3',5'-cyclic phosphodiesterase 8B (885 aa).

2 disordered regions span residues 18–41 (RDSDESSSPRQTTSVSQGPAAPLP) and 72–95 (TELGSGSSAGSAAPAATTSRGRRR). Polar residues predominate over residues 23-34 (SSSPRQTTSVSQ). Residues 75–90 (GSGSSAGSAAPAATTS) are compositionally biased toward low complexity. Positions 267 to 338 (ACNSVFTALD…DTINTCIKKG (72 aa)) constitute a PAS domain. The segment at 393 to 436 (IHRDSGDNSQTEPHSFRYKNRRKESIDVKSISSRGSDAPSLQNR) is disordered. The segment covering 422–436 (SISSRGSDAPSLQNR) has biased composition (polar residues). A Phosphoserine modification is found at serine 517. The PDEase domain maps to 539 to 875 (TINDVPPCIS…KHWKTLDDLK (337 aa)). Histidine 615 (proton donor) is an active-site residue. A divalent metal cation-binding residues include histidine 619, histidine 655, and aspartate 656. Serine 754 is subject to Phosphoserine. Aspartate 781 contributes to the a divalent metal cation binding site.

The protein belongs to the cyclic nucleotide phosphodiesterase family. PDE8 subfamily. A divalent metal cation is required as a cofactor. Abundantly expressed in the thyroid. Also very weakly expressed in brain, spinal cord and placenta. In the thyroid isoform 1 predominates, and isoforms 2 and 6 are also highly expressed. In the placenta isoforms 1 and 2 are expressed equally. In the brain isoform 2 predominates.

It carries out the reaction 3',5'-cyclic AMP + H2O = AMP + H(+). It functions in the pathway purine metabolism; 3',5'-cyclic AMP degradation; AMP from 3',5'-cyclic AMP: step 1/1. Its activity is regulated as follows. Inhibited by dipyridimole. Insensitive to selective PDE inhibitors including rolipram and milrinone as well as to the non-selective inhibitor, IBMX. Unaffected by cGMP. Hydrolyzes the second messenger cAMP, which is a key regulator of many important physiological processes. May be involved in specific signaling in the thyroid gland. The sequence is that of High affinity cAMP-specific and IBMX-insensitive 3',5'-cyclic phosphodiesterase 8B (PDE8B) from Homo sapiens (Human).